A 205-amino-acid polypeptide reads, in one-letter code: Urease accessory protein UreG (205 aa).

10–17 is a GTP binding site; it reads GPVGAGKT.

This sequence belongs to the SIMIBI class G3E GTPase family. UreG subfamily. In terms of assembly, homodimer. UreD, UreF and UreG form a complex that acts as a GTP-hydrolysis-dependent molecular chaperone, activating the urease apoprotein by helping to assemble the nickel containing metallocenter of UreC. The UreE protein probably delivers the nickel.

It is found in the cytoplasm. Functionally, facilitates the functional incorporation of the urease nickel metallocenter. This process requires GTP hydrolysis, probably effectuated by UreG. The protein is Urease accessory protein UreG of Corynebacterium glutamicum (strain ATCC 13032 / DSM 20300 / JCM 1318 / BCRC 11384 / CCUG 27702 / LMG 3730 / NBRC 12168 / NCIMB 10025 / NRRL B-2784 / 534).